Here is a 183-residue protein sequence, read N- to C-terminus: UPF0200 protein MmarC6_1392 (183 aa).

8–15 (GMPGSGKS) provides a ligand contact to ATP.

The protein belongs to the UPF0200 family.

The protein is UPF0200 protein MmarC6_1392 of Methanococcus maripaludis (strain C6 / ATCC BAA-1332).